The primary structure comprises 241 residues: tRNA pseudouridine synthase B (241 aa).

Asp45 (nucleophile) is an active-site residue.

Belongs to the pseudouridine synthase TruB family. Type 1 subfamily.

The catalysed reaction is uridine(55) in tRNA = pseudouridine(55) in tRNA. In terms of biological role, responsible for synthesis of pseudouridine from uracil-55 in the psi GC loop of transfer RNAs. The polypeptide is tRNA pseudouridine synthase B (Chlamydia trachomatis serovar L2 (strain ATCC VR-902B / DSM 19102 / 434/Bu)).